Here is a 345-residue protein sequence, read N- to C-terminus: MTYFPPAAEICDSPRHDWSIPEVLALFELPFVELIYRAQTVHRQHFNPNQVQMSTLLSIKTGGCPEDCAYCPQSVRYSTPVKAEPLLPLEEVLTAARNAKARGASRFCMGAAWRRLKERELEPVAKMITEVKALGLETCVTLGMLGPGQAERLKAAGLDYYNHNLDTSPEFYGEIITTRTYQDRLETLSQVREAGIHVCCGGIVGMGEERSDRAGLLANLANLPRHPESVPINRLVQVEGTPLAGAPELDPFEFVRTVACARILMPASFVRLSAGRETMSDELQALCFLAGANSIFYGEKLLTTPNPTTDHDQQLFERLGLELLFPQAQVAAPVPEADEVGSASG.

The region spanning 49 to 276 (NQVQMSTLLS…ASFVRLSAGR (228 aa)) is the Radical SAM core domain. The [4Fe-4S] cluster site is built by Cys64, Cys68, and Cys71. [2Fe-2S] cluster-binding residues include Cys108, Cys139, Cys199, and Arg271.

This sequence belongs to the radical SAM superfamily. Biotin synthase family. Homodimer. It depends on [4Fe-4S] cluster as a cofactor. The cofactor is [2Fe-2S] cluster.

It catalyses the reaction (4R,5S)-dethiobiotin + (sulfur carrier)-SH + 2 reduced [2Fe-2S]-[ferredoxin] + 2 S-adenosyl-L-methionine = (sulfur carrier)-H + biotin + 2 5'-deoxyadenosine + 2 L-methionine + 2 oxidized [2Fe-2S]-[ferredoxin]. Its pathway is cofactor biosynthesis; biotin biosynthesis; biotin from 7,8-diaminononanoate: step 2/2. Functionally, catalyzes the conversion of dethiobiotin (DTB) to biotin by the insertion of a sulfur atom into dethiobiotin via a radical-based mechanism. The protein is Biotin synthase of Nitrosococcus oceani (strain ATCC 19707 / BCRC 17464 / JCM 30415 / NCIMB 11848 / C-107).